We begin with the raw amino-acid sequence, 417 residues long: Guanine nucleotide-exchange factor SEC12 (417 aa).

At 1–388 (MGRRRGVELY…QLHLLPSRRS (388 aa)) the chain is on the cytoplasmic side. A 3'-nitrotyrosine modification is found at Tyr-10. Positions 101-135 (KGSKAEKSGSKEQGPRQRKGAAPAEKKSGAEVHPE) are disordered. 2 stretches are compositionally biased toward basic and acidic residues: residues 103–115 (SKAE…EQGP) and 124–135 (AEKKSGAEVHPE). WD repeat units lie at residues 152–191 (STEP…KVLE), 194–232 (AHEG…TQLQ), and 298–337 (CGHE…RLYY). Residues 389–409 (VPVWLLLLLCVGLIIVTILLL) traverse the membrane as a helical segment. The Lumenal segment spans residues 410–417 (QSAFPGFL).

Interacts with SAR1B (GDP-bound form). Interacts with MIA2; recruits PREB to endoplasmic reticulum exit sites. Interacts with CIDEB; facilitating loading of SCAP-SREBP into COPII vesicles.

The protein resides in the endoplasmic reticulum membrane. The protein localises to the nucleus. Its function is as follows. Guanine nucleotide exchange factor (GEF) that regulates the assembly of the coat protein complex II/COPII in endoplasmic reticulum (ER) to Golgi vesicle-mediated transport. Selectively activates SAR1A and SAR1B by promoting the exchange of guanosine diphosphate (GDP) for guanosine triphosphate (GTP) in these small GTPases. In their activated GTP-bound state, SAR1A and SAR1B insert into the membrane of the endoplasmic reticulum where they recruit the remainder of the coat protein complex II/COPII which is responsible for both the sorting of proteins and the deformation and budding of membranes into vesicles destined to the Golgi. Was first identified based on its probable role in the regulation of pituitary gene transcription. Binds to the prolactin gene (PRL) promoter and seems to activate transcription. The sequence is that of Guanine nucleotide-exchange factor SEC12 from Rattus norvegicus (Rat).